The following is a 271-amino-acid chain: Aspartate/glutamate leucyltransferase (271 aa).

It belongs to the R-transferase family. Bpt subfamily.

The protein localises to the cytoplasm. The catalysed reaction is N-terminal L-glutamyl-[protein] + L-leucyl-tRNA(Leu) = N-terminal L-leucyl-L-glutamyl-[protein] + tRNA(Leu) + H(+). It catalyses the reaction N-terminal L-aspartyl-[protein] + L-leucyl-tRNA(Leu) = N-terminal L-leucyl-L-aspartyl-[protein] + tRNA(Leu) + H(+). Functions in the N-end rule pathway of protein degradation where it conjugates Leu from its aminoacyl-tRNA to the N-termini of proteins containing an N-terminal aspartate or glutamate. This is Aspartate/glutamate leucyltransferase from Acinetobacter baumannii (strain SDF).